Here is a 371-residue protein sequence, read N- to C-terminus: Carnitine monooxygenase oxygenase subunit (371 aa).

Residues 44–152 enclose the Rieske domain; the sequence is WICVAHSSEL…VEEYAGFLFI (109 aa). Residues Cys86, His88, Cys106, and His109 each coordinate [2Fe-2S] cluster. Residues His208, His213, and Asp323 each coordinate Fe cation.

It belongs to the bacterial ring-hydroxylating dioxygenase alpha subunit family. CntA subfamily. As to quaternary structure, composed of an oxygenase subunit (cntA) and a reductase subunit (cntB). Requires [2Fe-2S] cluster as cofactor. Fe cation is required as a cofactor.

It carries out the reaction (R)-carnitine + NADH + O2 + H(+) = (3R)-3-hydroxy-4-oxobutanoate + trimethylamine + NAD(+) + H2O. The catalysed reaction is (R)-carnitine + NADPH + O2 + H(+) = (3R)-3-hydroxy-4-oxobutanoate + trimethylamine + NADP(+) + H2O. It functions in the pathway amine and polyamine metabolism; carnitine metabolism. Functionally, converts carnitine to trimethylamine and malic semialdehyde. In Acinetobacter baumannii (strain ATCC 19606 / DSM 30007 / JCM 6841 / CCUG 19606 / CIP 70.34 / NBRC 109757 / NCIMB 12457 / NCTC 12156 / 81), this protein is Carnitine monooxygenase oxygenase subunit.